A 107-amino-acid chain; its full sequence is MDTSSPSAFVNGALLRRFIGQKVRTVIQVTGSEIGSVVGKSTDDLQIVVRGSSPPSPLTTYLEVIGIAESDNAIRAETWTNFGNTFDTQNYNELCKLANGEFKHLFI.

Met-1 is subject to N-acetylmethionine.

It belongs to the replication factor A protein 3 family. As to quaternary structure, component of the heterotrimeric canonical replication protein A complex (RPA).

It is found in the nucleus. Its function is as follows. As part of the replication protein A (RPA/RP-A), a single-stranded DNA-binding heterotrimeric complex, may play an essential role in DNA replication, recombination and repair. Binds and stabilizes single-stranded DNA intermediates, preventing complementary DNA reannealing and recruiting different proteins involved in DNA metabolism. The sequence is that of Replication protein A 14 kDa subunit A (RPA3A) from Arabidopsis thaliana (Mouse-ear cress).